Consider the following 148-residue polypeptide: Small ribosomal subunit protein uS7c (148 aa).

Belongs to the universal ribosomal protein uS7 family. In terms of assembly, part of the 30S ribosomal subunit.

The protein resides in the plastid. It localises to the chloroplast. Functionally, one of the primary rRNA binding proteins, it binds directly to 16S rRNA where it nucleates assembly of the head domain of the 30S subunit. In Cyanidioschyzon merolae (strain NIES-3377 / 10D) (Unicellular red alga), this protein is Small ribosomal subunit protein uS7c (rps7).